A 600-amino-acid chain; its full sequence is MKNLMNGACLALLMSGTAALANEQRAGRDRQAPQWAIQMGDYANTRYSTLDQINKDNVKDLRVAWTFSTGVLRGHEGSPLVIGDVMYVHTPFPNRVFALDLNDNGKILWRYEPQQDPNVIAVMSCDTVYRGLSYADGMILLGQADTTVVALDATSGEVKWSTKIGDPGIGETLTATVVPVKDKVLVGISGGEYGVRGRMTALNLTDGSEAWKAWSTGPDEELLVDPETTTHLGKPIGADSSLNSWEGDQWQIGGGTIWGWFSYDPDLNLVYYGTGNPSTWNPSQRPGDNKWSMTIMARDADTGMAKWFYQMTPHDEWDYDGVNEMILTNQTVDGQERKLLTHFDRNGLAYTMDRETGELLVAEKYDPVVNWTTGVDMDPNSETYGRPAVVAEYSTAQNGEDENTTGVCPAALGTKDQQPAAFSPKTNLFYVPTNHVCMDYEPFRVAYTAGQPYVGATLSMYPAPNSHGGMGNFIAWHNTTGEIKWSVPEQFSVWSGALATAGDVVFYGTLEGYLKPVDAQTGEELYKFKTPSGIIGNVMTYEHGGKQYVGILSGVGGWAGIGLAAGLTNPNDGLGAVGGYASLSQYTELGGQLTVFELPG.

The first 21 residues, 1–21 (MKNLMNGACLALLMSGTAALA), serve as a signal peptide directing secretion. Glu-192 and Asn-276 together coordinate Ca(2+). The active-site Proton acceptor is Asp-318.

This sequence belongs to the bacterial PQQ dehydrogenase family. Pyrroloquinoline quinone is required as a cofactor. Requires Ca(2+) as cofactor.

This Paracoccus denitrificans protein is Putative dehydrogenase XoxF (xoxF).